A 738-amino-acid chain; its full sequence is Ethylene receptor 1 (738 aa).

The next 3 membrane-spanning stretches (helical) occupy residues 23–43, 53–73, and 92–112; these read ISDF…IYFV, WVLV…LINL, and VLTA…IPDL. Cu cation-binding residues include Cys-65 and His-69. Positions 158 to 307 constitute a GAF domain; the sequence is DRHTILKTTL…VVADQVAVAL (150 aa). One can recognise a Histidine kinase domain in the interval 350-585; sequence VMNHEMRTPM…IFDVKLGISE (236 aa). Residue His-353 is modified to Phosphohistidine; by autocatalysis. ADP is bound by residues 470–473, Asp-513, Lys-529, Ser-544, and Leu-548; that span reads NAVK. One can recognise a Response regulatory domain in the interval 611–729; that stretch reads KVLVMDENGV…NIRDVLSDLL (119 aa). The residue at position 659 (Asp-659) is a 4-aspartylphosphate. A Glycyl lysine isopeptide (Lys-Gly) (interchain with G-Cter in ubiquitin) cross-link involves residue Lys-714.

This sequence belongs to the ethylene receptor family. Homodimer; disulfide-linked. Heteromer with ERS1, ERS2, ETR2 and EIN4. Interacts with AHP1, AHP2 and AHP3. Interacts with RTE1. Interacts with EIN2. Cu cation is required as a cofactor. In terms of processing, autophosphorylated. Phosphorylation at His-353 modulates the interaction with EIN2. As to expression, leaves, roots, stems, seedlings, flowers, anthers, carpels and ovules.

It localises to the endoplasmic reticulum membrane. The enzyme catalyses ATP + protein L-histidine = ADP + protein N-phospho-L-histidine.. Its function is as follows. Ethylene receptor related to bacterial two-component regulators. Acts as a redundant negative regulator of ethylene signaling. In the presence of ethylene, the auto-kinase activity of ETR1 is inhibited and the non-phosphorylated kinase domain binds tightly to the corresponding domain of EIN2. The chain is Ethylene receptor 1 from Arabidopsis thaliana (Mouse-ear cress).